The following is a 562-amino-acid chain: Adenylate kinase isoenzyme 5 (562 aa).

2 adenylate kinase regions span residues 133–316 and 377–559; these read KIIL…MAVD and KIIF…TAID. 142–147 provides a ligand contact to ATP; the sequence is GSGKGT. An NMP 1 region spans residues 162–193; the sequence is SVGELLRKKIHSTSSNRKWSLIAKIITTGELA. AMP is bound by residues arginine 168, 191–193, 219–222, and glutamine 226; these read ELA and GFPR. Residues 256–266 form an LID 1 region; sequence KRAEQQGRPDD. Arginine 257 contacts ATP. The AMP site is built by arginine 263 and arginine 274. 386–391 lines the ATP pocket; that stretch reads GSGKGT. Residues 406–435 form an NMP 2 region; the sequence is STGELLREELASESERSKLIRDIMERGDLV. AMP is bound by residues threonine 407, arginine 412, 433 to 435, 462 to 465, and glutamine 469; these read DLV and GYPR. An LID 2 region spans residues 499–509; the sequence is QRSRSSLPVDD. ATP is bound at residue arginine 500. Arginine 517 lines the AMP pocket. Glycine 545 serves as a coordination point for ATP.

The protein belongs to the adenylate kinase family. As to quaternary structure, monomer. Interacts with YWHAZ. In terms of tissue distribution, brain specific.

It is found in the cytoplasm. The enzyme catalyses AMP + ATP = 2 ADP. It catalyses the reaction a 2'-deoxyribonucleoside 5'-diphosphate + ATP = a 2'-deoxyribonucleoside 5'-triphosphate + ADP. It carries out the reaction a ribonucleoside 5'-diphosphate + ATP = a ribonucleoside 5'-triphosphate + ADP. Nucleoside monophosphate (NMP) kinase that catalyzes the reversible transfer of the terminal phosphate group between nucleoside triphosphates and monophosphates. Active on AMP and dAMP with ATP as a donor. When GTP is used as phosphate donor, the enzyme phosphorylates AMP, CMP, and to a small extent dCMP. Also displays broad nucleoside diphosphate kinase activity. This chain is Adenylate kinase isoenzyme 5 (AK5), found in Homo sapiens (Human).